We begin with the raw amino-acid sequence, 72 residues long: NAD(P)H-quinone oxidoreductase subunit O (72 aa).

Belongs to the complex I NdhO subunit family. In terms of assembly, NDH-1 can be composed of about 15 different subunits; different subcomplexes with different compositions have been identified which probably have different functions.

Its subcellular location is the cellular thylakoid membrane. It catalyses the reaction a plastoquinone + NADH + (n+1) H(+)(in) = a plastoquinol + NAD(+) + n H(+)(out). The enzyme catalyses a plastoquinone + NADPH + (n+1) H(+)(in) = a plastoquinol + NADP(+) + n H(+)(out). NDH-1 shuttles electrons from an unknown electron donor, via FMN and iron-sulfur (Fe-S) centers, to quinones in the respiratory and/or the photosynthetic chain. The immediate electron acceptor for the enzyme in this species is believed to be plastoquinone. Couples the redox reaction to proton translocation, and thus conserves the redox energy in a proton gradient. Cyanobacterial NDH-1 also plays a role in inorganic carbon-concentration. In Synechococcus sp. (strain JA-3-3Ab) (Cyanobacteria bacterium Yellowstone A-Prime), this protein is NAD(P)H-quinone oxidoreductase subunit O.